A 452-amino-acid polypeptide reads, in one-letter code: Phosphatidylinositol N-acetylglucosaminyltransferase GPI3 subunit (452 aa).

A helical membrane pass occupies residues 407–427 (LYLLCGIVEYMLFFLLEWLYP).

This sequence belongs to the glycosyltransferase group 1 family. As to quaternary structure, component of the phosphatidylinositol N-acetylglucosaminyltransferase complex composed of at least GPI1, GPI2, GPI3, GPI15, GPI19 and ERI1.

It localises to the endoplasmic reticulum membrane. It catalyses the reaction a 1,2-diacyl-sn-glycero-3-phospho-(1D-myo-inositol) + UDP-N-acetyl-alpha-D-glucosamine = a 6-(N-acetyl-alpha-D-glucosaminyl)-1-(1,2-diacyl-sn-glycero-3-phospho)-1D-myo-inositol + UDP + H(+). Its pathway is glycolipid biosynthesis; glycosylphosphatidylinositol-anchor biosynthesis. With respect to regulation, inhibited by Ras, probably via the interaction between RAS2 and ERI1. In terms of biological role, catalytic subunit in the complex catalyzing the transfer of N-acetylglucosamine from UDP-N-acetylglucosamine to phosphatidylinositol, the first step of GPI biosynthesis. The sequence is that of Phosphatidylinositol N-acetylglucosaminyltransferase GPI3 subunit (SPT14) from Saccharomyces cerevisiae (strain RM11-1a) (Baker's yeast).